The following is a 71-amino-acid chain: Small ribosomal subunit protein bS21 (71 aa).

Residues 43–71 (TERKRAKASAVKRHAKKLARENARRTRLY) form a disordered region. A compositionally biased stretch (basic residues) spans 46–59 (KRAKASAVKRHAKK). Positions 60–71 (LARENARRTRLY) are enriched in basic and acidic residues.

The protein belongs to the bacterial ribosomal protein bS21 family.

This Pectobacterium atrosepticum (strain SCRI 1043 / ATCC BAA-672) (Erwinia carotovora subsp. atroseptica) protein is Small ribosomal subunit protein bS21.